Here is a 306-residue protein sequence, read N- to C-terminus: Porphobilinogen deaminase (306 aa).

Cys-244 is modified (S-(dipyrrolylmethanemethyl)cysteine).

The protein belongs to the HMBS family. Monomer. It depends on dipyrromethane as a cofactor.

It catalyses the reaction 4 porphobilinogen + H2O = hydroxymethylbilane + 4 NH4(+). It participates in porphyrin-containing compound metabolism; protoporphyrin-IX biosynthesis; coproporphyrinogen-III from 5-aminolevulinate: step 2/4. Its function is as follows. Tetrapolymerization of the monopyrrole PBG into the hydroxymethylbilane pre-uroporphyrinogen in several discrete steps. The sequence is that of Porphobilinogen deaminase from Streptococcus sanguinis (strain SK36).